Here is a 101-residue protein sequence, read N- to C-terminus: Small ribosomal subunit protein uS14 (101 aa).

It belongs to the universal ribosomal protein uS14 family. Part of the 30S ribosomal subunit. Contacts proteins S3 and S10.

Its function is as follows. Binds 16S rRNA, required for the assembly of 30S particles and may also be responsible for determining the conformation of the 16S rRNA at the A site. In Salmonella paratyphi A (strain ATCC 9150 / SARB42), this protein is Small ribosomal subunit protein uS14.